We begin with the raw amino-acid sequence, 309 residues long: Homoserine O-succinyltransferase (309 aa).

Cysteine 142 acts as the Acyl-thioester intermediate in catalysis. Positions 163 and 192 each coordinate substrate. Residue histidine 235 is the Proton acceptor of the active site. Glutamate 237 is an active-site residue. Position 249 (arginine 249) interacts with substrate.

Belongs to the MetA family.

It is found in the cytoplasm. It carries out the reaction L-homoserine + succinyl-CoA = O-succinyl-L-homoserine + CoA. The protein operates within amino-acid biosynthesis; L-methionine biosynthesis via de novo pathway; O-succinyl-L-homoserine from L-homoserine: step 1/1. Transfers a succinyl group from succinyl-CoA to L-homoserine, forming succinyl-L-homoserine. The chain is Homoserine O-succinyltransferase from Yersinia pseudotuberculosis serotype O:1b (strain IP 31758).